A 276-amino-acid chain; its full sequence is UPF0276 protein PA4106 (276 aa).

This sequence belongs to the UPF0276 family.

This chain is UPF0276 protein PA4106, found in Pseudomonas aeruginosa (strain ATCC 15692 / DSM 22644 / CIP 104116 / JCM 14847 / LMG 12228 / 1C / PRS 101 / PAO1).